A 211-amino-acid polypeptide reads, in one-letter code: Uracil phosphoribosyltransferase (211 aa).

Residues arginine 79, arginine 104, and 131 to 139 (DPMLATGGS) each bind 5-phospho-alpha-D-ribose 1-diphosphate. Uracil is bound by residues isoleucine 196 and 201-203 (GDA). Residue aspartate 202 participates in 5-phospho-alpha-D-ribose 1-diphosphate binding.

The protein belongs to the UPRTase family. Requires Mg(2+) as cofactor.

The catalysed reaction is UMP + diphosphate = 5-phospho-alpha-D-ribose 1-diphosphate + uracil. It functions in the pathway pyrimidine metabolism; UMP biosynthesis via salvage pathway; UMP from uracil: step 1/1. With respect to regulation, allosterically activated by GTP. In terms of biological role, catalyzes the conversion of uracil and 5-phospho-alpha-D-ribose 1-diphosphate (PRPP) to UMP and diphosphate. This is Uracil phosphoribosyltransferase from Limosilactobacillus reuteri (strain DSM 20016) (Lactobacillus reuteri).